Here is a 1187-residue protein sequence, read N- to C-terminus: DNA-directed RNA polymerase subunit beta (1187 aa).

The tract at residues 1150-1187 (KDEDDDPASSADDLGFNIGARPDAAAKEDQKAEEPEYQ) is disordered. A compositionally biased stretch (basic and acidic residues) spans 1173-1187 (AAAKEDQKAEEPEYQ).

Belongs to the RNA polymerase beta chain family. As to quaternary structure, the RNAP catalytic core consists of 2 alpha, 1 beta, 1 beta' and 1 omega subunit. When a sigma factor is associated with the core the holoenzyme is formed, which can initiate transcription.

The enzyme catalyses RNA(n) + a ribonucleoside 5'-triphosphate = RNA(n+1) + diphosphate. DNA-dependent RNA polymerase catalyzes the transcription of DNA into RNA using the four ribonucleoside triphosphates as substrates. The protein is DNA-directed RNA polymerase subunit beta of Bifidobacterium longum (strain DJO10A).